The sequence spans 223 residues: Adenylate kinase (223 aa).

Gly-10 to Thr-15 contacts ATP. The NMP stretch occupies residues Glu-30–Val-59. AMP is bound by residues Ser-31, Arg-36, Asp-57–Val-59, Gly-84–Arg-87, and Gln-91. The segment at Gly-125 to Asp-164 is LID. Arg-126 serves as a coordination point for ATP. Residues Arg-161 and Arg-173 each coordinate AMP. ATP is bound at residue Gly-209.

This sequence belongs to the adenylate kinase family. Monomer.

It localises to the cytoplasm. The enzyme catalyses AMP + ATP = 2 ADP. It functions in the pathway purine metabolism; AMP biosynthesis via salvage pathway; AMP from ADP: step 1/1. Functionally, catalyzes the reversible transfer of the terminal phosphate group between ATP and AMP. Plays an important role in cellular energy homeostasis and in adenine nucleotide metabolism. The polypeptide is Adenylate kinase (Nitratidesulfovibrio vulgaris (strain DSM 19637 / Miyazaki F) (Desulfovibrio vulgaris)).